A 282-amino-acid chain; its full sequence is Shikimate dehydrogenase (NADP(+)) (282 aa).

Residues 18-20 (SRS) and T65 each bind shikimate. The active-site Proton acceptor is the K69. E81 serves as a coordination point for NADP(+). N90 and D105 together coordinate shikimate. NADP(+) is bound by residues 130-134 (GAGGA), 154-159 (NRTPAR), and M222. Y224 is a binding site for shikimate. G245 contributes to the NADP(+) binding site.

This sequence belongs to the shikimate dehydrogenase family. As to quaternary structure, homodimer.

It carries out the reaction shikimate + NADP(+) = 3-dehydroshikimate + NADPH + H(+). The protein operates within metabolic intermediate biosynthesis; chorismate biosynthesis; chorismate from D-erythrose 4-phosphate and phosphoenolpyruvate: step 4/7. In terms of biological role, involved in the biosynthesis of the chorismate, which leads to the biosynthesis of aromatic amino acids. Catalyzes the reversible NADPH linked reduction of 3-dehydroshikimate (DHSA) to yield shikimate (SA). In Acidovorax ebreus (strain TPSY) (Diaphorobacter sp. (strain TPSY)), this protein is Shikimate dehydrogenase (NADP(+)).